We begin with the raw amino-acid sequence, 1370 residues long: DNA-directed RNA polymerase subunit beta (1370 aa).

Belongs to the RNA polymerase beta chain family. The RNAP catalytic core consists of 2 alpha, 1 beta, 1 beta' and 1 omega subunit. When a sigma factor is associated with the core the holoenzyme is formed, which can initiate transcription.

It catalyses the reaction RNA(n) + a ribonucleoside 5'-triphosphate = RNA(n+1) + diphosphate. Its function is as follows. DNA-dependent RNA polymerase catalyzes the transcription of DNA into RNA using the four ribonucleoside triphosphates as substrates. This is DNA-directed RNA polymerase subunit beta from Delftia acidovorans (strain DSM 14801 / SPH-1).